A 143-amino-acid chain; its full sequence is MAKKIQAYIKLQVKAGQANPSPPVGPALGQHGVNIMEFCKAFNAKTQGMEPGLPTPVIITVYSDRSFTFETKSTPASVLLKKAAGLTSGSARPNTVKVGTVTRAQLEEIAKTKQADLTAADLDAAVRTIAGSARSMGLNVEGV.

It belongs to the universal ribosomal protein uL11 family. As to quaternary structure, part of the ribosomal stalk of the 50S ribosomal subunit. Interacts with L10 and the large rRNA to form the base of the stalk. L10 forms an elongated spine to which L12 dimers bind in a sequential fashion forming a multimeric L10(L12)X complex. One or more lysine residues are methylated.

In terms of biological role, forms part of the ribosomal stalk which helps the ribosome interact with GTP-bound translation factors. This chain is Large ribosomal subunit protein uL11, found in Ectopseudomonas mendocina (strain ymp) (Pseudomonas mendocina).